The primary structure comprises 342 residues: Tetraacyldisaccharide 4'-kinase (342 aa).

68-75 (TVGGTGKT) provides a ligand contact to ATP.

This sequence belongs to the LpxK family.

The catalysed reaction is a lipid A disaccharide + ATP = a lipid IVA + ADP + H(+). It participates in glycolipid biosynthesis; lipid IV(A) biosynthesis; lipid IV(A) from (3R)-3-hydroxytetradecanoyl-[acyl-carrier-protein] and UDP-N-acetyl-alpha-D-glucosamine: step 6/6. Functionally, transfers the gamma-phosphate of ATP to the 4'-position of a tetraacyldisaccharide 1-phosphate intermediate (termed DS-1-P) to form tetraacyldisaccharide 1,4'-bis-phosphate (lipid IVA). The sequence is that of Tetraacyldisaccharide 4'-kinase from Burkholderia vietnamiensis (strain G4 / LMG 22486) (Burkholderia cepacia (strain R1808)).